A 239-amino-acid chain; its full sequence is Apoptosis regulator Bcl-2 (239 aa).

The short motif at 10 to 30 (DNREIVMKYIHYKLSQRGYEW) is the BH4 element. The interval 39-85 (PPGAAPAPGIFSSQPGHTPHPAASRDPVARTSPLQTPAAPGAAAGPA) is disordered. The residue at position 69 (T69) is a Phosphothreonine; by MAPK8. The residue at position 70 (S70) is a Phosphoserine; by MAPK8 and PKC. Residues 75 to 85 (PAAPGAAAGPA) are compositionally biased toward low complexity. A Phosphoserine; by MAPK8 modification is found at S87. Positions 92–107 (VVHLTLRQAGDDFSRR) are required for interaction with SEPTIN4 isoform ARTS. Required XIAP-mediated ubiquitination and apoptosis. The short motif at 93 to 107 (VHLTLRQAGDDFSRR) is the BH3 element. The BH1 motif lies at 136–155 (ELFRDGVNWGRIVAFFEFGG). A BH2 motif is present at residues 187 to 202 (TWIQDNGGWDAFVELY). The chain crosses the membrane as a helical span at residues 212–233 (FSWLSLKTLLSLALVGACITLG).

Belongs to the Bcl-2 family. Forms homodimers, and heterodimers with BAX, BAD, BAK and Bcl-X(L). Heterodimerization with BAX requires intact BH1 and BH2 motifs, and is necessary for anti-apoptotic activity. Part of a complex composed of SEPTIN4 isoform ARTS, XIAP and BCL2, within the complex interacts (via BH3 domain) with SEPTIN4 isoform ARTS and XIAP, SEPTIN4 isoform ARTS acts as a scaffold protein and stabilizes the complex. Component of the complex, at least composed of LRPPRC, BECN1 and BCL2; the interactions prevent BECN1 from forming an autophagy-inducing complex with PIK3C3. Interacts with EI24. Also interacts with APAF1, BBC3, BCL2L1, BNIPL, MRPL41 and TP53BP2. Binding to FKBP8 seems to target BCL2 to the mitochondria and probably interferes with the binding of BCL2 to its targets. Interacts with BAG1 in an ATP-dependent manner. Interacts with RAF1 (the 'Ser-338' and 'Ser-339' phosphorylated form). Interacts (via the BH4 domain) with EGLN3; the interaction prevents the formation of the BAX-BCL2 complex and inhibits the anti-apoptotic activity of BCL2. Interacts with G0S2; this interaction also prevents the formation of the anti-apoptotic BAX-BCL2 complex. Interacts with RTL10/BOP. Interacts with the SCF(FBXO10) complex. Interacts (via the loop between motifs BH4 and BH3) with NLRP1 (via LRR repeats), but not with NLRP2, NLRP3, NLRP4, PYCARD, nor MEFV. Interacts with GIMAP3/IAN4, GIMAP4/IAN1 and GIMAP5/IAN5. Interacts with BCAP31. Interacts with IRF3; the interaction is inhibited by Sendai virus infection. Interacts with BECN1; thereby inhibiting autophagy in non-starvation conditions. Interacts with AMBRA1; thereby inhibiting autophagy. In terms of assembly, (Microbial infection) Interacts with Toxoplasma gondii ROP17; the interaction probably promotes BCL2 phosphorylation and degradation. Phosphorylation/dephosphorylation on Ser-70 regulates anti-apoptotic activity. Growth factor-stimulated phosphorylation on Ser-70 by PKC is required for the anti-apoptosis activity and occurs during the G2/M phase of the cell cycle. In the absence of growth factors, BCL2 appears to be phosphorylated by other protein kinases such as ERKs and stress-activated kinases. Phosphorylated by MAPK8/JNK1 at Thr-69, Ser-70 and Ser-87, which stimulates starvation-induced autophagy. Dephosphorylated by protein phosphatase 2A (PP2A). In terms of processing, proteolytically cleaved by caspases during apoptosis. The cleaved protein, lacking the BH4 motif, has pro-apoptotic activity, causes the release of cytochrome c into the cytosol promoting further caspase activity. Post-translationally, monoubiquitinated by PRKN, leading to an increase in its stability. Ubiquitinated by SCF(FBXO10), leading to its degradation by the proteasome. Ubiquitinated by XIAP, leading to its degradation by the proteasome. As to expression, expressed in a variety of tissues.

The protein localises to the mitochondrion outer membrane. The protein resides in the nucleus membrane. It localises to the endoplasmic reticulum membrane. Its subcellular location is the cytoplasm. Suppresses apoptosis in a variety of cell systems including factor-dependent lymphohematopoietic and neural cells. Regulates cell death by controlling the mitochondrial membrane permeability. Appears to function in a feedback loop system with caspases. Inhibits caspase activity either by preventing the release of cytochrome c from the mitochondria and/or by binding to the apoptosis-activating factor (APAF-1). Also acts as an inhibitor of autophagy: interacts with BECN1 and AMBRA1 during non-starvation conditions and inhibits their autophagy function. May attenuate inflammation by impairing NLRP1-inflammasome activation, hence CASP1 activation and IL1B release. The protein is Apoptosis regulator Bcl-2 (BCL2) of Homo sapiens (Human).